A 174-amino-acid chain; its full sequence is Ribosome rescue factor SmrB (174 aa).

Residues 96-171 (LDLHGLTQQQ…GDAAILVLIE (76 aa)) enclose the Smr domain.

This sequence belongs to the SmrB family. Associates with collided ribosomes, but not with correctly translating polysomes.

Acts as a ribosome collision sensor. Detects stalled/collided disomes (pairs of ribosomes where the leading ribosome is stalled and a second ribosome has collided with it) and endonucleolytically cleaves mRNA at the 5' boundary of the stalled ribosome. Stalled/collided disomes form a new interface (primarily via the 30S subunits) that binds SmrB. Cleaved mRNA becomes available for tmRNA ligation, leading to ribosomal subunit dissociation and rescue of stalled ribosomes. The polypeptide is Ribosome rescue factor SmrB (Tolumonas auensis (strain DSM 9187 / NBRC 110442 / TA 4)).